We begin with the raw amino-acid sequence, 64 residues long: Large ribosomal subunit protein bL35 (64 aa).

Residues 1–23 (MPKMKTKSGAAKRFKKTANGFKH) are disordered.

The protein belongs to the bacterial ribosomal protein bL35 family.

This Stutzerimonas stutzeri (strain A1501) (Pseudomonas stutzeri) protein is Large ribosomal subunit protein bL35.